Consider the following 377-residue polypeptide: Erythronate-4-phosphate dehydrogenase (377 aa).

Ser45 and Thr66 together coordinate substrate. NAD(+) contacts are provided by Asp146 and Thr175. The active site involves Arg208. Residue Asp232 participates in NAD(+) binding. The active site involves Glu237. The Proton donor role is filled by His254. Gly257 is an NAD(+) binding site. Tyr258 is a substrate binding site.

Belongs to the D-isomer specific 2-hydroxyacid dehydrogenase family. PdxB subfamily. As to quaternary structure, homodimer.

It is found in the cytoplasm. It catalyses the reaction 4-phospho-D-erythronate + NAD(+) = (R)-3-hydroxy-2-oxo-4-phosphooxybutanoate + NADH + H(+). Its pathway is cofactor biosynthesis; pyridoxine 5'-phosphate biosynthesis; pyridoxine 5'-phosphate from D-erythrose 4-phosphate: step 2/5. In terms of biological role, catalyzes the oxidation of erythronate-4-phosphate to 3-hydroxy-2-oxo-4-phosphonooxybutanoate. The chain is Erythronate-4-phosphate dehydrogenase from Sodalis glossinidius (strain morsitans).